A 485-amino-acid polypeptide reads, in one-letter code: Alpha-amylase (485 aa).

Residues 1–18 form the signal peptide; the sequence is MQHLSILLVVLGSSIAFA. Pyrrolidone carboxylic acid is present on glutamine 19. A disulfide bridge links cysteine 46 with cysteine 102. Positions 116, 163, and 172 each coordinate Ca(2+). The cysteines at positions 152 and 165 are disulfide-linked. Arginine 200 serves as a coordination point for chloride. Aspartate 202 functions as the Nucleophile in the catalytic mechanism. Position 206 (histidine 206) interacts with Ca(2+). The active-site Proton donor is the glutamate 238. Asparagine 301 contacts chloride. Cysteine 369 and cysteine 375 are oxidised to a cystine. N-linked (GlcNAc...) asparagine glycans are attached at residues asparagine 423 and asparagine 449. Cysteine 440 and cysteine 452 are disulfide-bonded.

This sequence belongs to the glycosyl hydrolase 13 family. In terms of assembly, monomer. It depends on Ca(2+) as a cofactor. Chloride is required as a cofactor.

The enzyme catalyses Endohydrolysis of (1-&gt;4)-alpha-D-glucosidic linkages in polysaccharides containing three or more (1-&gt;4)-alpha-linked D-glucose units.. Its function is as follows. Involved in the digestion of starch. The protein is Alpha-amylase of Hypothenemus hampei (Coffee berry borer).